A 62-amino-acid polypeptide reads, in one-letter code: Ferredoxin-2 (62 aa).

2 4Fe-4S ferredoxin-type domains span residues 2–28 and 29–62; these read AHRI…SAGD and SIYV…IIKV. The [4Fe-4S] cluster site is built by cysteine 9, cysteine 12, cysteine 15, cysteine 19, cysteine 38, cysteine 41, cysteine 50, and cysteine 54.

Requires [4Fe-4S] cluster as cofactor.

Its function is as follows. Ferredoxins are iron-sulfur proteins that transfer electrons in a wide variety of metabolic reactions. The protein is Ferredoxin-2 of Chlorobaculum tepidum (strain ATCC 49652 / DSM 12025 / NBRC 103806 / TLS) (Chlorobium tepidum).